The sequence spans 476 residues: Protein transport protein Sec61 subunit alpha-like 2 (476 aa).

Residues 2-33 (AIKFLEVIKPFCAVLPEIQKPERRIQFKEKVL) are Cytoplasmic-facing. The helical transmembrane segment at 34–53 (WTAITLFIFLVCCQIPLFGI) threads the bilayer. Residues 54–76 (MSSDSADPFYWMRVIMASNRGTL) are Lumenal-facing. Residues 77-96 (MELGISPIVTSGLIMQLLAG) traverse the membrane as a helical segment. The Cytoplasmic segment spans residues 97–117 (AKIIEVGDTPKDRALFNGAQK). A helical membrane pass occupies residues 118–138 (LFGMIITIGQAVVYVMTGMYG). The Lumenal segment spans residues 139–144 (DPSEMG). Residues 145–165 (AGICLLIIIQLFVAGLIVLLL) form a helical membrane-spanning segment. Topologically, residues 166–172 (DELLQKG) are cytoplasmic. The chain crosses the membrane as a helical span at residues 173 to 193 (YGLGSGISLFIATNICETIVW). Topologically, residues 194-240 (KAFSPTTVNTGRGTEFEGAIIALFHLLATRTDKVRALREAFYRQNLP) are lumenal. A helical membrane pass occupies residues 241 to 261 (NLMNLIATIFVFAVVIYFQGF). Over 262–288 (RVDLPIKSARYRGQYNTYPIKLFYTSN) the chain is Cytoplasmic. Residues 289–309 (IPIILQSALVSNLYVISQMLS) traverse the membrane as a helical segment. Residues 310–354 (TRFSGNFLVNLLGTWSDTSTGGPARAYPVGGLCYYLSPPESFGTV) lie on the Lumenal side of the membrane. The chain crosses the membrane as a helical span at residues 355–375 (LEDPIHAIIYIIFMLGSCAFF). Residues 376-420 (SKTWIEVSGSSAKDVAKQLKEQQMVMRGHRETSMVHELNRYIPTA) lie on the Cytoplasmic side of the membrane. Residues 421 to 441 (AAFGGLCIGGLSVMADFLGAI) form a helical membrane-spanning segment. The Lumenal portion of the chain corresponds to 442–445 (GSGT). Residues 446–462 (GILLAVTIIYQYFEIFV) form a helical membrane-spanning segment. Residues 463-476 (KEQSEVGSVGALLF) are Cytoplasmic-facing.

It belongs to the SecY/SEC61-alpha family. As to quaternary structure, the SEC61 channel-forming translocon complex consists of channel-forming core components SEC61A1, SEC61B and SEC61G and different auxiliary components such as SEC62 and SEC63.

It is found in the endoplasmic reticulum membrane. In terms of biological role, component of SEC61 channel-forming translocon complex that mediates transport of signal peptide-containing precursor polypeptides across the endoplasmic reticulum (ER). Forms a ribosome receptor and a gated pore in the ER membrane, both functions required for cotranslational translocation of nascent polypeptides. The protein is Protein transport protein Sec61 subunit alpha-like 2 (sec61al2) of Danio rerio (Zebrafish).